The following is a 151-amino-acid chain: UPF0178 protein Swoo_1444 (151 aa).

This sequence belongs to the UPF0178 family.

This chain is UPF0178 protein Swoo_1444, found in Shewanella woodyi (strain ATCC 51908 / MS32).